A 435-amino-acid chain; its full sequence is Gamma-glutamyl phosphate reductase (435 aa).

It belongs to the gamma-glutamyl phosphate reductase family.

It is found in the cytoplasm. The enzyme catalyses L-glutamate 5-semialdehyde + phosphate + NADP(+) = L-glutamyl 5-phosphate + NADPH + H(+). The protein operates within amino-acid biosynthesis; L-proline biosynthesis; L-glutamate 5-semialdehyde from L-glutamate: step 2/2. Catalyzes the NADPH-dependent reduction of L-glutamate 5-phosphate into L-glutamate 5-semialdehyde and phosphate. The product spontaneously undergoes cyclization to form 1-pyrroline-5-carboxylate. The protein is Gamma-glutamyl phosphate reductase of Parasynechococcus marenigrum (strain WH8102).